Here is a 539-residue protein sequence, read N- to C-terminus: Eukaryotic translation initiation factor 3 subunit L (539 aa).

The PCI domain maps to 306 to 514; sequence TFSDILLYVQ…IHIADTKVSH (209 aa).

This sequence belongs to the eIF-3 subunit L family. Component of the eukaryotic translation initiation factor 3 (eIF-3) complex. The eIF-3 complex interacts with pix.

It is found in the cytoplasm. Functionally, component of the eukaryotic translation initiation factor 3 (eIF-3) complex, which is involved in protein synthesis of a specialized repertoire of mRNAs and, together with other initiation factors, stimulates binding of mRNA and methionyl-tRNAi to the 40S ribosome. The eIF-3 complex specifically targets and initiates translation of a subset of mRNAs involved in cell proliferation. The protein is Eukaryotic translation initiation factor 3 subunit L of Drosophila willistoni (Fruit fly).